Reading from the N-terminus, the 255-residue chain is Octanoyltransferase (255 aa).

The region spanning 54-238 (GDANELVWLL…SFTTIFGATV (185 aa)) is the BPL/LPL catalytic domain. Substrate-binding positions include 92–99 (RGGQLTYH), 167–169 (AIG), and 180–182 (GIA). Cys-198 (acyl-thioester intermediate) is an active-site residue.

It belongs to the LipB family.

Its subcellular location is the cytoplasm. The enzyme catalyses octanoyl-[ACP] + L-lysyl-[protein] = N(6)-octanoyl-L-lysyl-[protein] + holo-[ACP] + H(+). It functions in the pathway protein modification; protein lipoylation via endogenous pathway; protein N(6)-(lipoyl)lysine from octanoyl-[acyl-carrier-protein]: step 1/2. Its function is as follows. Catalyzes the transfer of endogenously produced octanoic acid from octanoyl-acyl-carrier-protein onto the lipoyl domains of lipoate-dependent enzymes. Lipoyl-ACP can also act as a substrate although octanoyl-ACP is likely to be the physiological substrate. The protein is Octanoyltransferase of Rhodopseudomonas palustris (strain BisB5).